A 107-amino-acid polypeptide reads, in one-letter code: Nucleoid-associated protein BLi00029/BL02358 (107 aa).

Positions 1–27 (MRGGMGNMQKMMKQMQKMQKDMQKAQE) are disordered. A compositionally biased stretch (low complexity) spans 8-17 (MQKMMKQMQK). Residues 18–27 (MQKDMQKAQE) show a composition bias toward basic and acidic residues.

Belongs to the YbaB/EbfC family. Homodimer.

It localises to the cytoplasm. Its subcellular location is the nucleoid. Binds to DNA and alters its conformation. May be involved in regulation of gene expression, nucleoid organization and DNA protection. This is Nucleoid-associated protein BLi00029/BL02358 from Bacillus licheniformis (strain ATCC 14580 / DSM 13 / JCM 2505 / CCUG 7422 / NBRC 12200 / NCIMB 9375 / NCTC 10341 / NRRL NRS-1264 / Gibson 46).